The primary structure comprises 606 residues: Aspartate--tRNA(Asp/Asn) ligase (606 aa).

L-aspartate is bound at residue Glu175. Residues 199–202 (QLFK) form an aspartate region. Arg221 serves as a coordination point for L-aspartate. Residues 221–223 (RDE) and Gln230 each bind ATP. His453 serves as a coordination point for L-aspartate. Residue Glu487 coordinates ATP. Arg494 is a binding site for L-aspartate. 539 to 542 (GWDR) contributes to the ATP binding site. The interval 564–606 (GGVDPLTDAPGTIPAEQRKETGVDFKPEKAAKAAQGEKAGKES) is disordered. The span at 579 to 594 (EQRKETGVDFKPEKAA) shows a compositional bias: basic and acidic residues.

This sequence belongs to the class-II aminoacyl-tRNA synthetase family. Type 1 subfamily. As to quaternary structure, homodimer.

Its subcellular location is the cytoplasm. The enzyme catalyses tRNA(Asx) + L-aspartate + ATP = L-aspartyl-tRNA(Asx) + AMP + diphosphate. Its function is as follows. Aspartyl-tRNA synthetase with relaxed tRNA specificity since it is able to aspartylate not only its cognate tRNA(Asp) but also tRNA(Asn). Reaction proceeds in two steps: L-aspartate is first activated by ATP to form Asp-AMP and then transferred to the acceptor end of tRNA(Asp/Asn). This chain is Aspartate--tRNA(Asp/Asn) ligase, found in Corynebacterium aurimucosum (strain ATCC 700975 / DSM 44827 / CIP 107346 / CN-1) (Corynebacterium nigricans).